The following is a 142-amino-acid chain: Putative tyrosine phosphatase 123R (142 aa).

Positions 2–137 constitute a Tyrosine-protein phosphatase domain; it reads EPTKIVENLY…LAQFERWLNS (136 aa). C81 acts as the Phosphocysteine intermediate in catalysis.

Belongs to the protein-tyrosine phosphatase family.

The protein is Putative tyrosine phosphatase 123R of Invertebrate iridescent virus 6 (IIV-6).